The chain runs to 165 residues: V-type proton ATPase 16 kDa proteolipid subunit (165 aa).

Topologically, residues 1–10 are lumenal; that stretch reads MPSTFSGDET. Residues 11-33 form a helical membrane-spanning segment; it reads APFFGFLGAAAALVFSCMGAAYG. At 34-55 the chain is on the cytoplasmic side; the sequence is TAKSGVGVASMGVMRPELVMKS. Residues 56-76 form a helical membrane-spanning segment; the sequence is IVPVVMAGVLGIYGLIIAVII. Over 77-95 the chain is Lumenal; that stretch reads STGINPKTKSYYLFDGYAH. A helical membrane pass occupies residues 96 to 117; it reads LSSGLACGLAGLSAGMAIGIVG. At 118–129 the chain is on the cytoplasmic side; the sequence is DAGVRANAQQPK. The chain crosses the membrane as a helical span at residues 130 to 155; the sequence is LFVGMILILIFAEALALYGLIVGIIL. Residues 156-165 lie on the Lumenal side of the membrane; the sequence is SSRAGQSRAE.

This sequence belongs to the V-ATPase proteolipid subunit family. As to quaternary structure, V-ATPase is a heteromultimeric enzyme composed of a peripheral catalytic V1 complex (main components: subunits A, B, C, D, E, and F) attached to an integral membrane V0 proton pore complex (main component: the proteolipid protein; which is present as a hexamer that forms the proton-conducting pore).

The protein localises to the vacuole membrane. Its function is as follows. Proton-conducting pore forming subunit of the membrane integral V0 complex of vacuolar ATPase. V-ATPase is responsible for acidifying a variety of intracellular compartments in eukaryotic cells. This is V-type proton ATPase 16 kDa proteolipid subunit from Nicotiana tabacum (Common tobacco).